A 444-amino-acid chain; its full sequence is Vacuolar protein sorting-associated protein 4B (444 aa).

The region spanning 4–82 is the MIT domain; the sequence is TNTNLQKAID…KEYLKKKEKK (79 aa). Positions 19–82 form a coiled coil; it reads AQEDKAGNYE…KEYLKKKEKK (64 aa). Residues 77–118 form a disordered region; the sequence is KKKEKKPQKPVKEEQSGPVDEKGNDSDGEAESDDPEKKKLQN. Positions 86–101 are enriched in basic and acidic residues; it reads PVKEEQSGPVDEKGND. 2 positions are modified to phosphoserine: serine 102 and serine 108. 174–181 serves as a coordination point for ATP; it reads GPPGTGKS. Serine 410 carries the phosphoserine modification.

It belongs to the AAA ATPase family. Proposed to be monomeric or homodimeric in nucleotide-free form and to oligomerize upon binding to ATP to form two stacked hexameric or heptameric rings with a central pore through which ESCRT-III substrates are translocated in an ATP-dependent manner. In vitro, associates on the inside of a helical tubular structure formed by a CHMP2A-CHMP3 polymer. Interacts with CHMP1A, CHMP1B, CHMP4B and CHMP6. Interacts with CHMP2A. Interacts with VPS4A; the interaction suggests a heteromeric assembly with VPS4A. Interacts with VTA1. As to expression, high level expression seen in the kidney. It is also expressed in the heart, brain, spleen, lung, liver, skeletal muscle, and testis.

It is found in the late endosome membrane. It catalyses the reaction ATP + H2O = ADP + phosphate + H(+). Functionally, involved in late steps of the endosomal multivesicular bodies (MVB) pathway. Recognizes membrane-associated ESCRT-III assemblies and catalyzes their disassembly, possibly in combination with membrane fission. Redistributes the ESCRT-III components to the cytoplasm for further rounds of MVB sorting. MVBs contain intraluminal vesicles (ILVs) that are generated by invagination and scission from the limiting membrane of the endosome and mostly are delivered to lysosomes enabling degradation of membrane proteins, such as stimulated growth factor receptors, lysosomal enzymes and lipids. VPS4A/B are required for the exosomal release of SDCBP, CD63 and syndecan. Its function is as follows. (Microbial infection) In conjunction with the ESCRT machinery also appears to function in topologically equivalent membrane fission events, such as the terminal stages of cytokinesis and enveloped virus budding (lentiviruses). The sequence is that of Vacuolar protein sorting-associated protein 4B from Mus musculus (Mouse).